The primary structure comprises 545 residues: Glucose-6-phosphate isomerase (545 aa).

E345 acts as the Proton donor in catalysis. Residues H376 and K514 contribute to the active site.

Belongs to the GPI family.

The protein localises to the cytoplasm. The catalysed reaction is alpha-D-glucose 6-phosphate = beta-D-fructose 6-phosphate. It participates in carbohydrate biosynthesis; gluconeogenesis. The protein operates within carbohydrate degradation; glycolysis; D-glyceraldehyde 3-phosphate and glycerone phosphate from D-glucose: step 2/4. Functionally, catalyzes the reversible isomerization of glucose-6-phosphate to fructose-6-phosphate. In Leptothrix cholodnii (strain ATCC 51168 / LMG 8142 / SP-6) (Leptothrix discophora (strain SP-6)), this protein is Glucose-6-phosphate isomerase.